The primary structure comprises 135 residues: Aspartate 1-decarboxylase (135 aa).

Serine 25 (schiff-base intermediate with substrate; via pyruvic acid) is an active-site residue. Serine 25 is subject to Pyruvic acid (Ser). Threonine 57 contacts substrate. Residue tyrosine 58 is the Proton donor of the active site. A substrate-binding site is contributed by 73–75; that stretch reads GSA.

It belongs to the PanD family. Heterooctamer of four alpha and four beta subunits. Pyruvate serves as cofactor. Post-translationally, is synthesized initially as an inactive proenzyme, which is activated by self-cleavage at a specific serine bond to produce a beta-subunit with a hydroxyl group at its C-terminus and an alpha-subunit with a pyruvoyl group at its N-terminus.

The protein resides in the cytoplasm. The enzyme catalyses L-aspartate + H(+) = beta-alanine + CO2. It functions in the pathway cofactor biosynthesis; (R)-pantothenate biosynthesis; beta-alanine from L-aspartate: step 1/1. Its function is as follows. Catalyzes the pyruvoyl-dependent decarboxylation of aspartate to produce beta-alanine. The chain is Aspartate 1-decarboxylase from Albidiferax ferrireducens (strain ATCC BAA-621 / DSM 15236 / T118) (Rhodoferax ferrireducens).